Reading from the N-terminus, the 476-residue chain is Sedoheptulokinase (476 aa).

This sequence belongs to the FGGY kinase family.

It localises to the cytoplasm. It carries out the reaction sedoheptulose + ATP = D-sedoheptulose 7-phosphate + ADP + H(+). In terms of biological role, acts as a modulator of macrophage activation through control of glucose metabolism. The polypeptide is Sedoheptulokinase (Shpk) (Mus musculus (Mouse)).